A 354-amino-acid chain; its full sequence is NADH-quinone oxidoreductase subunit H (354 aa).

8 consecutive transmembrane segments (helical) span residues 22–42 (ILIR…YLIL), 91–111 (YLIA…VIPF), 124–144 (LLYV…AGWA), 168–188 (MGFA…SAIV), 203–223 (ILSW…ISGV), 255–275 (LFFL…ALMF), 291–311 (IPGF…FIWI), and 326–346 (LGWK…AIWI).

This sequence belongs to the complex I subunit 1 family. NDH-1 is composed of 14 different subunits. Subunits NuoA, H, J, K, L, M, N constitute the membrane sector of the complex.

The protein localises to the cell inner membrane. The catalysed reaction is a quinone + NADH + 5 H(+)(in) = a quinol + NAD(+) + 4 H(+)(out). NDH-1 shuttles electrons from NADH, via FMN and iron-sulfur (Fe-S) centers, to quinones in the respiratory chain. The immediate electron acceptor for the enzyme in this species is believed to be ubiquinone. Couples the redox reaction to proton translocation (for every two electrons transferred, four hydrogen ions are translocated across the cytoplasmic membrane), and thus conserves the redox energy in a proton gradient. This subunit may bind ubiquinone. This is NADH-quinone oxidoreductase subunit H from Cupriavidus necator (strain ATCC 17699 / DSM 428 / KCTC 22496 / NCIMB 10442 / H16 / Stanier 337) (Ralstonia eutropha).